Reading from the N-terminus, the 475-residue chain is UDP-N-acetylmuramate--L-alanine ligase (475 aa).

125-131 (GTHGKTT) lines the ATP pocket.

This sequence belongs to the MurCDEF family.

Its subcellular location is the cytoplasm. It carries out the reaction UDP-N-acetyl-alpha-D-muramate + L-alanine + ATP = UDP-N-acetyl-alpha-D-muramoyl-L-alanine + ADP + phosphate + H(+). It participates in cell wall biogenesis; peptidoglycan biosynthesis. Functionally, cell wall formation. This Actinobacillus pleuropneumoniae serotype 7 (strain AP76) protein is UDP-N-acetylmuramate--L-alanine ligase.